A 136-amino-acid polypeptide reads, in one-letter code: NLP effector protein 13 (136 aa).

Positions 1–9 (MYSWYFPKD) match the Conserved undecapeptide motif I motif. The Hepta-peptide GHRHDWE motif II signature appears at 16 to 22 (GHRHDWE).

The protein belongs to the Necrosis inducing protein (NPP1) family.

It localises to the secreted. In terms of biological role, secreted effector that contributes moderately to virulence during infection by P.capsici. Causes only small yellow areas at 3 days after inoculation of host C.annuum leaves; these areas expand somewhat and became necrotic at 7 days after inoculation. Leads only to chlorotic areas, without necrosis at 7 days after non-host N.benthamiana leaves infection. The chain is NLP effector protein 13 from Phytophthora capsici.